We begin with the raw amino-acid sequence, 414 residues long: Esterase FrsA (414 aa).

This sequence belongs to the FrsA family.

It carries out the reaction a carboxylic ester + H2O = an alcohol + a carboxylate + H(+). Its function is as follows. Catalyzes the hydrolysis of esters. This chain is Esterase FrsA, found in Klebsiella pneumoniae subsp. pneumoniae (strain ATCC 700721 / MGH 78578).